Consider the following 322-residue polypeptide: MLTDYLQACERGLEPLFSPQILSAVMALSRQRLVERPHGDLPRWMAALDALPAGPTNCALDQNTLTIGRAGEQNEEAVKLALQGLIPWRKGPFEFFGVPVETEWRSDWKWQRVAPHLSSLQGRRILDVGCGSGYHCWRMAAAGASCVVGIDPTILFLVQYLAVRRFAPDLPVWFLPLRMEELPAEGGQFDTVFSMGVLYHRRSPLDHLLELKGALCAGGELVLETLVVEGDECTVLMPQDRYAMMRNVFFLPSVAMLSRWLERCGFVDVRCVDESNTSVQEQRSTDWMRFQSLPDFLDPEDHSLTREGYPAPRRAVLVARKP.

Carboxy-S-adenosyl-L-methionine-binding positions include K90, W104, K109, G129, 151 to 153 (DPT), 179 to 180 (ME), M195, Y199, and R314.

It belongs to the class I-like SAM-binding methyltransferase superfamily. CmoB family. In terms of assembly, homotetramer.

It catalyses the reaction carboxy-S-adenosyl-L-methionine + 5-hydroxyuridine(34) in tRNA = 5-carboxymethoxyuridine(34) in tRNA + S-adenosyl-L-homocysteine + H(+). Functionally, catalyzes carboxymethyl transfer from carboxy-S-adenosyl-L-methionine (Cx-SAM) to 5-hydroxyuridine (ho5U) to form 5-carboxymethoxyuridine (cmo5U) at position 34 in tRNAs. This is tRNA U34 carboxymethyltransferase from Alcanivorax borkumensis (strain ATCC 700651 / DSM 11573 / NCIMB 13689 / SK2).